Reading from the N-terminus, the 256-residue chain is Pyridoxine 5'-phosphate synthase (256 aa).

Asparagine 10 is a 3-amino-2-oxopropyl phosphate binding site. Aspartate 12–histidine 13 contributes to the 1-deoxy-D-xylulose 5-phosphate binding site. Arginine 21 is a binding site for 3-amino-2-oxopropyl phosphate. Histidine 46 serves as the catalytic Proton acceptor. Residues arginine 48 and histidine 53 each contribute to the 1-deoxy-D-xylulose 5-phosphate site. Glutamate 73 acts as the Proton acceptor in catalysis. Threonine 103 is a binding site for 1-deoxy-D-xylulose 5-phosphate. Catalysis depends on histidine 193, which acts as the Proton donor. 3-amino-2-oxopropyl phosphate is bound by residues glycine 194 and glycine 215 to histidine 216.

It belongs to the PNP synthase family. Homooctamer; tetramer of dimers.

Its subcellular location is the cytoplasm. It carries out the reaction 3-amino-2-oxopropyl phosphate + 1-deoxy-D-xylulose 5-phosphate = pyridoxine 5'-phosphate + phosphate + 2 H2O + H(+). It participates in cofactor biosynthesis; pyridoxine 5'-phosphate biosynthesis; pyridoxine 5'-phosphate from D-erythrose 4-phosphate: step 5/5. In terms of biological role, catalyzes the complicated ring closure reaction between the two acyclic compounds 1-deoxy-D-xylulose-5-phosphate (DXP) and 3-amino-2-oxopropyl phosphate (1-amino-acetone-3-phosphate or AAP) to form pyridoxine 5'-phosphate (PNP) and inorganic phosphate. The sequence is that of Pyridoxine 5'-phosphate synthase from Zymomonas mobilis subsp. mobilis (strain ATCC 31821 / ZM4 / CP4).